The following is a 361-amino-acid chain: Phosphate acyltransferase (361 aa).

Residues 340–361 form a disordered region; that stretch reads VPADGAATEQGPTPRRIAPPRT.

This sequence belongs to the PlsX family. As to quaternary structure, homodimer. Probably interacts with PlsY.

It localises to the cytoplasm. The enzyme catalyses a fatty acyl-[ACP] + phosphate = an acyl phosphate + holo-[ACP]. It functions in the pathway lipid metabolism; phospholipid metabolism. In terms of biological role, catalyzes the reversible formation of acyl-phosphate (acyl-PO(4)) from acyl-[acyl-carrier-protein] (acyl-ACP). This enzyme utilizes acyl-ACP as fatty acyl donor, but not acyl-CoA. In Anaeromyxobacter dehalogenans (strain 2CP-1 / ATCC BAA-258), this protein is Phosphate acyltransferase.